Here is a 1049-residue protein sequence, read N- to C-terminus: Solvent-resistant pump membrane transporter SrpB (1049 aa).

Helical transmembrane passes span 10–30, 339–359, 366–386, 392–412, 440–460, 470–490, 542–562, 871–891, 895–915, 927–947, 973–993, and 1008–1028; these read IFAW…LAKM, SVVH…YLFL, LIPT…LPYF, VLTM…AIVV, GALV…AFFG, FAIT…VFTP, LAFL…PKAF, APLL…ALYE, VPVS…LATL, VGLM…VEFA, ILMT…ASGA, and GMIT…VVVV.

It belongs to the resistance-nodulation-cell division (RND) (TC 2.A.6) family.

The protein localises to the cell inner membrane. In terms of biological role, the inner membrane transporter component of an organic solvent efflux pump. Involved in export of a number of low log POW compounds including hexane (log POW 3.5), toluene (log POW 2.5) and dimethylphthalate (log POW 2.3). The solvent resistance phenotype has been postulated to depend on the operon expression level. In Pseudomonas putida (Arthrobacter siderocapsulatus), this protein is Solvent-resistant pump membrane transporter SrpB (srpB).